Here is a 146-residue protein sequence, read N- to C-terminus: Protein MGF 100-3L (146 aa).

This sequence belongs to the asfivirus MGF 100 family.

Its function is as follows. Plays a role in virus cell tropism, and may be required for efficient virus replication in macrophages. The sequence is that of Protein MGF 100-3L from Ornithodoros (relapsing fever ticks).